We begin with the raw amino-acid sequence, 616 residues long: Dihydroxy-acid dehydratase (616 aa).

Asp-81 serves as a coordination point for Mg(2+). Cys-122 is a [2Fe-2S] cluster binding site. Positions 123 and 124 each coordinate Mg(2+). Position 124 is an N6-carboxylysine (Lys-124). [2Fe-2S] cluster is bound at residue Cys-195. Glu-491 serves as a coordination point for Mg(2+). Catalysis depends on Ser-517, which acts as the Proton acceptor.

Belongs to the IlvD/Edd family. In terms of assembly, homodimer. [2Fe-2S] cluster is required as a cofactor. Requires Mg(2+) as cofactor.

The catalysed reaction is (2R)-2,3-dihydroxy-3-methylbutanoate = 3-methyl-2-oxobutanoate + H2O. The enzyme catalyses (2R,3R)-2,3-dihydroxy-3-methylpentanoate = (S)-3-methyl-2-oxopentanoate + H2O. It functions in the pathway amino-acid biosynthesis; L-isoleucine biosynthesis; L-isoleucine from 2-oxobutanoate: step 3/4. The protein operates within amino-acid biosynthesis; L-valine biosynthesis; L-valine from pyruvate: step 3/4. Functions in the biosynthesis of branched-chain amino acids. Catalyzes the dehydration of (2R,3R)-2,3-dihydroxy-3-methylpentanoate (2,3-dihydroxy-3-methylvalerate) into 2-oxo-3-methylpentanoate (2-oxo-3-methylvalerate) and of (2R)-2,3-dihydroxy-3-methylbutanoate (2,3-dihydroxyisovalerate) into 2-oxo-3-methylbutanoate (2-oxoisovalerate), the penultimate precursor to L-isoleucine and L-valine, respectively. The chain is Dihydroxy-acid dehydratase from Salmonella gallinarum (strain 287/91 / NCTC 13346).